Reading from the N-terminus, the 323-residue chain is uncharacterized protein (323 aa).

The protein belongs to the glycosyltransferase 2 family.

This is an uncharacterized protein from Haemophilus influenzae (strain ATCC 51907 / DSM 11121 / KW20 / Rd).